The sequence spans 827 residues: Copper-transporting ATPase 2 (827 aa).

2 HMA domains span residues Val15–Arg80 and Ala82–Arg148. Cu cation is bound by residues Cys26, Cys29, Cys93, and Cys96. Helical transmembrane passes span Val174 to Ile194, Asn210 to Phe230, Ser246 to Pro266, Ser271 to Gly291, Gly430 to Phe450, and Phe458 to Ala478. Asp515 acts as the 4-aspartylphosphate intermediate in catalysis. Residues Asp714 and Asp718 each coordinate Mg(2+). 2 helical membrane passes run Asn771 to Val793 and Leu797 to Leu819.

It belongs to the cation transport ATPase (P-type) (TC 3.A.3) family. Type IB subfamily.

It is found in the cell membrane. It carries out the reaction Cu(2+)(in) + ATP + H2O = Cu(2+)(out) + ADP + phosphate + H(+). Functionally, involved in copper transport. This Rhizobium meliloti (strain 1021) (Ensifer meliloti) protein is Copper-transporting ATPase 2 (actP2).